We begin with the raw amino-acid sequence, 234 residues long: Large ribosomal subunit protein uL1 (234 aa).

Belongs to the universal ribosomal protein uL1 family. Part of the 50S ribosomal subunit.

In terms of biological role, binds directly to 23S rRNA. The L1 stalk is quite mobile in the ribosome, and is involved in E site tRNA release. Protein L1 is also a translational repressor protein, it controls the translation of the L11 operon by binding to its mRNA. The polypeptide is Large ribosomal subunit protein uL1 (Aliivibrio fischeri (strain MJ11) (Vibrio fischeri)).